A 104-amino-acid chain; its full sequence is Putative membrane protein insertion efficiency factor (104 aa).

The disordered stretch occupies residues 83 to 104 (SSPTPLAESPDDRTVPHTQETS).

It belongs to the UPF0161 family.

The protein resides in the cell inner membrane. Its function is as follows. Could be involved in insertion of integral membrane proteins into the membrane. The polypeptide is Putative membrane protein insertion efficiency factor (Chlamydia trachomatis serovar D (strain ATCC VR-885 / DSM 19411 / UW-3/Cx)).